We begin with the raw amino-acid sequence, 347 residues long: NADH-ubiquinone oxidoreductase chain 2 (347 aa).

11 helical membrane-spanning segments follow: residues 1 to 21 (MNPLIFIMLILTIILGTSIIL), 25 to 45 (HWFMIWLGFEMNMMAMIPVLM), 59 to 79 (YFLTQATASMILMLALIINLM), 96 to 116 (LLITIALTMKLGLAPFHFWVP), 122 to 142 (VSLQAGLILLTWQKIAPLAVM), 145 to 165 (IFASINPNLLLTMALLSIMIG), 178 to 198 (IMAYSSIAHMGWMTAIMIYNP), 200 to 220 (LMLLNLLLYILMTTSMFMMFM), 242 to 262 (VLMMTTLLSLGGLPPLTGFMP), 274 to 294 (NSVILPTSMAILALINLFFYM), and 325 to 345 (LLAPLITLSTLILPLTPMFIL).

It belongs to the complex I subunit 2 family. As to quaternary structure, core subunit of respiratory chain NADH dehydrogenase (Complex I) which is composed of 45 different subunits. Interacts with TMEM242.

Its subcellular location is the mitochondrion inner membrane. It carries out the reaction a ubiquinone + NADH + 5 H(+)(in) = a ubiquinol + NAD(+) + 4 H(+)(out). Functionally, core subunit of the mitochondrial membrane respiratory chain NADH dehydrogenase (Complex I) which catalyzes electron transfer from NADH through the respiratory chain, using ubiquinone as an electron acceptor. Essential for the catalytic activity and assembly of complex I. This Myosorex kihaulei (Kihaule's mouse shrew) protein is NADH-ubiquinone oxidoreductase chain 2.